Here is a 154-residue protein sequence, read N- to C-terminus: Large ribosomal subunit protein uL15 (154 aa).

The tract at residues 1–44 is disordered; sequence MKLNELGNCKGATRNRKRVGRGIGSGTGKTSGRGVKGQKSRSGV. Residues 21-35 show a composition bias toward gly residues; it reads RGIGSGTGKTSGRGV.

Belongs to the universal ribosomal protein uL15 family. In terms of assembly, part of the 50S ribosomal subunit.

In terms of biological role, binds to the 23S rRNA. This Bartonella quintana (strain Toulouse) (Rochalimaea quintana) protein is Large ribosomal subunit protein uL15.